The primary structure comprises 677 residues: Testis-specific Y-encoded-like protein 2 (677 aa).

The tract at residues 1–54 is disordered; that stretch reads MDRPDEGPPAKTPRLSSSEPRQRDLPPPPPPPLQRLPLPPPQQRPRPQEETEAA. Lys-11 participates in a covalent cross-link: Glycyl lysine isopeptide (Lys-Gly) (interchain with G-Cter in SUMO2). Ser-18 bears the Phosphoserine mark. A compositionally biased stretch (pro residues) spans 25 to 44; sequence LPPPPPPPLQRLPLPPPQQR. Glycyl lysine isopeptide (Lys-Gly) (interchain with G-Cter in SUMO2) cross-links involve residues Lys-158 and Lys-160. Residues 175-202 form a disordered region; the sequence is KESVRRRQRRRRRRRKQRKAKESRERSA. Over residues 178–193 the composition is skewed to basic residues; it reads VRRRQRRRRRRRKQRK. Thr-333 is subject to Phosphothreonine. Positions 469–658 are disordered; that stretch reads ANENLCDSEN…EVNSEDSDIQ (190 aa). A compositionally biased stretch (polar residues) spans 484–493; sequence GYNTKITDNK. The span at 509-525 shows a compositional bias: basic and acidic residues; the sequence is EKNTYDSEDSNSEKADG. Polar residues predominate over residues 526 to 540; sequence DNTTLRDNQQVTNIQ. Acidic residues-rich tracts occupy residues 543–581 and 606–627; these read SDSD…DDDD and DYEE…ETSE. The span at 639 to 650 shows a compositional bias: basic and acidic residues; sequence DERIYGEERSEV. Phosphoserine is present on residues Ser-648, Ser-652, and Ser-655.

The protein belongs to the nucleosome assembly protein (NAP) family. Interacts with histones. Interacts with CASK. Part of a complex containing CASK, TBR1 and TSPYL2. In terms of processing, phosphorylation at Thr-333 impairs function on cell proliferation. In terms of tissue distribution, present at high levels in the pituitary gland and at moderate levels in adrenal gland, brain, testis and ovary. In brain, expressed both in mature neurons and progenitor cells (at protein level).

It is found in the nucleus. The protein localises to the cytoplasm. Part of the CASK/TBR1/TSPYL2 transcriptional complex which modulates gene expression in response to neuronal synaptic activity, probably by facilitating nucleosome assembly. May inhibit cell proliferation by inducing p53-dependent CDKN1A expression. The sequence is that of Testis-specific Y-encoded-like protein 2 (Tspyl2) from Mus musculus (Mouse).